Here is a 259-residue protein sequence, read N- to C-terminus: Phosphoadenosine 5'-phosphosulfate reductase (259 aa).

The active-site Nucleophile; cysteine thiosulfonate intermediate is the Cys-244.

It belongs to the PAPS reductase family. CysH subfamily.

It localises to the cytoplasm. The enzyme catalyses [thioredoxin]-disulfide + sulfite + adenosine 3',5'-bisphosphate + 2 H(+) = [thioredoxin]-dithiol + 3'-phosphoadenylyl sulfate. It functions in the pathway sulfur metabolism; hydrogen sulfide biosynthesis; sulfite from sulfate: step 3/3. Its function is as follows. Catalyzes the formation of sulfite from phosphoadenosine 5'-phosphosulfate (PAPS) using thioredoxin as an electron donor. The protein is Phosphoadenosine 5'-phosphosulfate reductase of Vibrio campbellii (strain ATCC BAA-1116).